Consider the following 463-residue polypeptide: Cysteine--tRNA ligase (463 aa).

Cys27 is a binding site for Zn(2+). Residues 29 to 39 carry the 'HIGH' region motif; it reads PTVYGLIHIGN. Residues Cys207, His232, and Glu236 each coordinate Zn(2+). Positions 264 to 268 match the 'KMSKS' region motif; the sequence is KMSKS. Residue Lys267 participates in ATP binding.

The protein belongs to the class-I aminoacyl-tRNA synthetase family. As to quaternary structure, monomer. The cofactor is Zn(2+).

The protein resides in the cytoplasm. It catalyses the reaction tRNA(Cys) + L-cysteine + ATP = L-cysteinyl-tRNA(Cys) + AMP + diphosphate. The protein is Cysteine--tRNA ligase of Pseudothermotoga lettingae (strain ATCC BAA-301 / DSM 14385 / NBRC 107922 / TMO) (Thermotoga lettingae).